A 53-amino-acid polypeptide reads, in one-letter code: Small, acid-soluble spore protein K (53 aa).

The disordered stretch occupies residues 1–53 (MRNKERNFPNQNNNKFEGEPRAKAEYASKRANGTTNTHPQERMHASGKRDDNF). Basic and acidic residues-rich tracts occupy residues 16 to 28 (FEGE…EYAS) and 39 to 53 (PQER…DDNF).

This sequence belongs to the SspK family.

It is found in the spore core. In Geobacillus sp. (strain WCH70), this protein is Small, acid-soluble spore protein K.